A 201-amino-acid polypeptide reads, in one-letter code: uncharacterized protein (201 aa).

The interval 121–141 is disordered; that stretch reads HHRTRPGRGPGPRPGGSAMAG.

This is an uncharacterized protein from Mycobacterium tuberculosis (strain ATCC 25618 / H37Rv).